A 396-amino-acid polypeptide reads, in one-letter code: NADH-quinone oxidoreductase subunit D (396 aa).

Belongs to the complex I 49 kDa subunit family. NDH-1 is composed of 14 different subunits. Subunits NuoB, C, D, E, F, and G constitute the peripheral sector of the complex.

It is found in the cell inner membrane. It carries out the reaction a quinone + NADH + 5 H(+)(in) = a quinol + NAD(+) + 4 H(+)(out). NDH-1 shuttles electrons from NADH, via FMN and iron-sulfur (Fe-S) centers, to quinones in the respiratory chain. The immediate electron acceptor for the enzyme in this species is believed to be ubiquinone. Couples the redox reaction to proton translocation (for every two electrons transferred, four hydrogen ions are translocated across the cytoplasmic membrane), and thus conserves the redox energy in a proton gradient. In Bartonella tribocorum (strain CIP 105476 / IBS 506), this protein is NADH-quinone oxidoreductase subunit D.